Consider the following 813-residue polypeptide: Fibroblast growth factor receptor 2 (813 aa).

The N-terminal stretch at M1–R14 is a signal peptide. Residues R18 to E367 lie on the Extracellular side of the membrane. The Ig-like C2-type 1 domain occupies Y21–T117. A disulfide bond links C58 and C103. N-linked (GlcNAc...) asparagine glycosylation is found at N79 and N115. Residues A119–R143 are disordered. Residues G123–T136 show a composition bias toward acidic residues. Ig-like C2-type domains are found at residues P145–D237 and P246–T348. The interval K152–R169 is heparin-binding. C170 and C221 form a disulfide bridge. 5 N-linked (GlcNAc...) asparagine glycosylation sites follow: N231, N255, N287, N308, and N321. Cysteines 268 and 332 form a disulfide. Residues I368–C388 form a helical membrane-spanning segment. The Cytoplasmic segment spans residues R389–T813. The residue at position 456 (Y456) is a Phosphotyrosine; by autocatalysis. Residues L471–L760 form the Protein kinase domain. Residues L477–V485, K507, E555–A557, and N561 each bind ATP. Position 576 is a phosphotyrosine; by autocatalysis (Y576). The Proton acceptor role is filled by D616. Phosphotyrosine; by autocatalysis occurs at positions 646, 647, and 759. Positions P771 to P792 are enriched in low complexity. A disordered region spans residues P771–L801.

The protein belongs to the protein kinase superfamily. Tyr protein kinase family. Fibroblast growth factor receptor subfamily. Monomer. Homodimer after ligand binding. In terms of processing, autophosphorylated. Binding of FGF family members together with heparan sulfate proteoglycan or heparin promotes receptor dimerization and autophosphorylation on tyrosine residues. Autophosphorylation occurs in trans between the two FGFR molecules present in the dimer. Post-translationally, N-glycosylated in the endoplasmic reticulum. The N-glycan chains undergo further maturation to an Endo H-resistant form in the Golgi apparatus. Ubiquitinated. FGFR2 is rapidly ubiquitinated after autophosphorylation, leading to internalization and degradation. Subject to degradation both in lysosomes and by the proteasome. In terms of tissue distribution, expressed in the anterior neural plate in early neurula stage embryos. Later in development, the protein is also expressed in the eye anlagen, midbrain-hindbrain boundary and otic vesicle.

It localises to the cell membrane. The protein resides in the golgi apparatus. Its subcellular location is the cytoplasmic vesicle. It catalyses the reaction L-tyrosyl-[protein] + ATP = O-phospho-L-tyrosyl-[protein] + ADP + H(+). Its activity is regulated as follows. Present in an inactive conformation in the absence of bound ligand. Ligand binding leads to dimerization and activation by autophosphorylation on tyrosine residues. Tyrosine-protein kinase that acts as a cell-surface receptor for fibroblast growth factors and plays an essential role in the regulation of cell proliferation, differentiation, migration and apoptosis, and in the regulation of embryonic development. Required for normal embryonic patterning, limb bud development, lung morphogenesis, osteogenesis and skin development. Plays an essential role in the regulation of osteoblast differentiation, proliferation and apoptosis, and is required for normal skeleton development. Promotes cell proliferation in keratinocytes and immature osteoblasts, but promotes apoptosis in differentiated osteoblasts. Phosphorylates PLCG1, FRS2 and PAK4. Ligand binding leads to the activation of several signaling cascades. Activation of PLCG1 leads to the production of the cellular signaling molecules diacylglycerol and inositol 1,4,5-trisphosphate. Phosphorylation of FRS2 triggers recruitment of GRB2, GAB1, PIK3R1 and SOS1, and mediates activation of RAS, MAPK1/ERK2, MAPK3/ERK1 and the MAP kinase signaling pathway, as well as of the AKT1 signaling pathway. FGFR2 signaling is down-regulated by ubiquitination, internalization and degradation. Mutations that lead to constitutive kinase activation or impair normal FGFR2 maturation, internalization and degradation lead to aberrant signaling. Over-expressed FGFR2 promotes activation of STAT1. The protein is Fibroblast growth factor receptor 2 (fgfr2) of Xenopus laevis (African clawed frog).